Consider the following 289-residue polypeptide: Purine nucleoside phosphorylase (289 aa).

The residue at position 1 (M1) is an N-acetylmethionine. Phosphate contacts are provided by residues S33, H64, and 84 to 86; that span reads RFH. Y88 is an a purine D-ribonucleoside binding site. A116 serves as a coordination point for phosphate. A purine D-ribonucleoside contacts are provided by E201 and M219. S220 is a phosphate binding site. Residues N243 and H257 each coordinate a purine D-ribonucleoside.

The protein belongs to the PNP/MTAP phosphorylase family. In terms of assembly, homotrimer.

The protein localises to the cytoplasm. The enzyme catalyses inosine + phosphate = alpha-D-ribose 1-phosphate + hypoxanthine. It catalyses the reaction guanosine + phosphate = alpha-D-ribose 1-phosphate + guanine. It carries out the reaction 2'-deoxyguanosine + phosphate = 2-deoxy-alpha-D-ribose 1-phosphate + guanine. The catalysed reaction is 2'-deoxyinosine + phosphate = 2-deoxy-alpha-D-ribose 1-phosphate + hypoxanthine. Its pathway is purine metabolism; purine nucleoside salvage. In terms of biological role, catalyzes the phosphorolytic breakdown of the N-glycosidic bond in the beta-(deoxy)ribonucleoside molecules, with the formation of the corresponding free purine bases and pentose-1-phosphate. Preferentially acts on 6-oxopurine nucleosides including inosine and guanosine. This Mus musculus (Mouse) protein is Purine nucleoside phosphorylase (Pnp).